The primary structure comprises 272 residues: TLC domain-containing protein 4 C (272 aa).

7 consecutive transmembrane segments (helical) span residues 16-36 (FSNSLYYRNSIFFSIIFFIIY), 71-91 (VSMIHAFLVLPFCIISAVESF), 103-123 (SLLMVLSISSGYFIWDLIICY), 128-148 (LVGTPMIIHAIMGLSSNIYVA), 155-175 (CFVPIVAILLITEISTIPLNM), 196-216 (FVITFLVSRCIIGLPFDIYLV), and 233-253 (VFITECGIQFFLNSYWSFLLI). The TLC domain maps to 61 to 261 (KKKLEWDQRV…LIKKLYQTYL (201 aa)).

Belongs to the TLCD4 family.

It is found in the membrane. The sequence is that of TLC domain-containing protein 4 C (tlcd4c) from Dictyostelium discoideum (Social amoeba).